The following is a 456-amino-acid chain: Protein shifted (456 aa).

Residues 1–30 form the signal peptide; that stretch reads MTHQGIGCLVKWLYLVLIVHTLLCIGQLEC. The interval 34-112 is disordered; that stretch reads HHNRNNNNNN…GGGGSRHNRN (79 aa). A compositionally biased stretch (basic and acidic residues) spans 44–55; that stretch reads RRADSSSSEEGH. An N-linked (GlcNAc...) asparagine glycan is attached at N57. Positions 77-87 are enriched in basic residues; sequence HQPRRGQRKKQ. Gly residues predominate over residues 88-107; sequence QGGGGGGSGGGGGNGGGGGS. One can recognise a WIF domain in the interval 119–261; it reads LWINEQQLKM…PIRLNFKKEC (143 aa). Residues N173, N217, and N227 are each glycosylated (N-linked (GlcNAc...) asparagine). Intrachain disulfides connect C224-C261, C283-C293, C287-C299, C301-C310, C315-C325, C319-C331, C333-C342, C347-C357, C351-C363, C365-C374, C379-C389, C383-C395, C397-C406, C416-C423, C418-C429, and C431-C440. 5 consecutive EGF-like domains span residues 279 to 311, 315 to 342, 343 to 375, 376 to 407, and 412 to 441; these read TLQE…QYCE, CFPQ…GTQC, EGGI…LRCE, YSKC…DHCE, and QRSI…RHCN. Residue N324 is glycosylated (N-linked (GlcNAc...) asparagine). Residue N420 is glycosylated (N-linked (GlcNAc...) asparagine).

As to quaternary structure, interacts with hh. In terms of tissue distribution, at the blastoderm stage, it is ubiquitously expressed. As embryogenesis continues, it is expressed in the epidermis and central nervous system, this expression being segmentally modulated. Also highly expressed at the foregut and hindgut throughout embryogenesis. In third instar wing imaginal disks, it is highly expressed in the most anterior and posterior parts of the disk and weakly expressed at the antero/posterior (A/P) compartment border. In the leg disks and the antenna part of the eye-antennal imaginal disk it is also weakly expressed at the A/P compartment border. Weakly expressed in the morphogenetic furrow in the eye primordium.

It is found in the secreted. Its subcellular location is the extracellular space. It localises to the extracellular matrix. Its function is as follows. Required for normal accumulation and movement of lipid-modified hedgehog (hh) morphogen. May act by stabilizing the interaction between heparan sulfate proteoglycans (HSPGs) and hh, HSPGs being required for diffusion of hh morphogen. Not involved in wingless (wg) morphogen movement, suggesting that it may provide HSPG specificity for Hh. This chain is Protein shifted (shf), found in Drosophila melanogaster (Fruit fly).